The sequence spans 241 residues: L-aspartate dehydrogenase (241 aa).

NAD(+) contacts are provided by residues 10–11 (NI), Asp28, 56–57 (AS), 63–64 (EY), 78–79 (IS), Ala109, and Asn164. His193 is an active-site residue.

Belongs to the L-aspartate dehydrogenase family. As to quaternary structure, homodimer.

It carries out the reaction L-aspartate + NADP(+) + H2O = oxaloacetate + NH4(+) + NADPH + H(+). It catalyses the reaction L-aspartate + NAD(+) + H2O = oxaloacetate + NH4(+) + NADH + H(+). It functions in the pathway cofactor biosynthesis; NAD(+) biosynthesis; iminoaspartate from L-aspartate (dehydrogenase route): step 1/1. Competitively inhibited by L-malate and NH(4)(+). Specifically catalyzes the NAD or NADP-dependent dehydrogenation of L-aspartate to iminoaspartate. Does not show aspartate oxidase activity. Is also able to catalyze the reverse reaction, i.e. the reductive amination of oxaloacetate. The sequence is that of L-aspartate dehydrogenase from Thermotoga maritima (strain ATCC 43589 / DSM 3109 / JCM 10099 / NBRC 100826 / MSB8).